Consider the following 308-residue polypeptide: Cysteine proteinase 3 (308 aa).

Positions 1 to 13 (MFALILFVSLACA) are cleaved as a signal peptide. Positions 14–92 (NEVAFKQWAA…TSNVKAAVKA (79 aa)) are cleaved as a propeptide — activation peptide. 2 cysteine pairs are disulfide-bonded: Cys112/Cys153 and Cys146/Cys186. Cys115 is an active-site residue. Residues His251 and Asn271 contribute to the active site.

It belongs to the peptidase C1 family.

Its subcellular location is the cytoplasm. It localises to the cytoplasmic vesicle. The protein resides in the phagosome. The enzyme catalyses Hydrolysis of proteins, including basement membrane collagen and azocasein. Preferential cleavage: Arg-Arg-|-Xaa in small molecule substrates including Z-Arg-Arg-|-NHMec.. Cysteine protease which may be involved in pathogenicity. This Entamoeba histolytica (strain ATCC 30459 / HM-1:IMSS / ABRM) protein is Cysteine proteinase 3.